We begin with the raw amino-acid sequence, 407 residues long: Elongation factor Tu (407 aa).

Residues 10–217 (KPHVNVGTIG…ALDSYIPEPE (208 aa)) form the tr-type G domain. The tract at residues 19–26 (GHVDHGKT) is G1. Position 19-26 (19-26 (GHVDHGKT)) interacts with GTP. Thr-26 provides a ligand contact to Mg(2+). The interval 60–64 (GITIA) is G2. The G3 stretch occupies residues 81–84 (DCPG). Residues 81–85 (DCPGH) and 136–139 (NKAD) contribute to the GTP site. Residues 136–139 (NKAD) form a G4 region. Residues 184–186 (SAL) are G5.

This sequence belongs to the TRAFAC class translation factor GTPase superfamily. Classic translation factor GTPase family. EF-Tu/EF-1A subfamily. Monomer.

Its subcellular location is the cytoplasm. The catalysed reaction is GTP + H2O = GDP + phosphate + H(+). Functionally, GTP hydrolase that promotes the GTP-dependent binding of aminoacyl-tRNA to the A-site of ribosomes during protein biosynthesis. This is Elongation factor Tu from Saccharophagus degradans (strain 2-40 / ATCC 43961 / DSM 17024).